A 162-amino-acid chain; its full sequence is Transcription elongation factor GreA (162 aa).

Residues N48–Q76 adopt a coiled-coil conformation. Positions G111–L132 are disordered.

The protein belongs to the GreA/GreB family.

Functionally, necessary for efficient RNA polymerase transcription elongation past template-encoded arresting sites. The arresting sites in DNA have the property of trapping a certain fraction of elongating RNA polymerases that pass through, resulting in locked ternary complexes. Cleavage of the nascent transcript by cleavage factors such as GreA or GreB allows the resumption of elongation from the new 3'terminus. GreA releases sequences of 2 to 3 nucleotides. The sequence is that of Transcription elongation factor GreA from Oenococcus oeni (strain ATCC BAA-331 / PSU-1).